Reading from the N-terminus, the 396-residue chain is Subtilisin-like protease 5 (396 aa).

A signal peptide spans 1–20 (MTGFFTFLSFSLAALSVTNA). A propeptide spanning residues 21-116 (AHILSVPKGA…VEPDAIISQH (96 aa)) is cleaved from the precursor. The region spanning 37–113 (YIVVMKDDTS…VAFVEPDAII (77 aa)) is the Inhibitor I9 domain. Residue asparagine 63 is glycosylated (N-linked (GlcNAc...) asparagine). Residues 125 to 396 (PWGLSRLSNR…SRLLYNGSGR (272 aa)) form the Peptidase S8 domain. Catalysis depends on charge relay system residues aspartate 156 and histidine 187. 2 N-linked (GlcNAc...) asparagine glycosylation sites follow: asparagine 230 and asparagine 248. Residue serine 342 is the Charge relay system of the active site. Polar residues predominate over residues 376–389 (PTIRNPGPDTTSRL). The segment at 376 to 396 (PTIRNPGPDTTSRLLYNGSGR) is disordered. Residue asparagine 392 is glycosylated (N-linked (GlcNAc...) asparagine).

This sequence belongs to the peptidase S8 family.

It localises to the secreted. Secreted subtilisin-like serine protease with keratinolytic activity that contributes to pathogenicity. The chain is Subtilisin-like protease 5 (SUB5) from Trichophyton tonsurans (Scalp ringworm fungus).